Consider the following 331-residue polypeptide: Chitin synthase export chaperone (331 aa).

Transmembrane regions (helical) follow at residues 52-72 (GAASFVHIIALAMTVIMILHI), 84-104 (IITFFYIYMLLTMCSLVIDAG), 122-142 (GLTSALCTSLLVNGFVGFQLY), 150-170 (VWLLRLTSTAMFAISFVISLL), 184-204 (VGMFVVLYILNAICIAVYLIM), 219-239 (LGHIAFGLLVFICGQVLLYAF), and 249-269 (HYLDGLFFTTICNLLAVMMVY).

It belongs to the CHS7 family. Interacts with chs3.

The protein localises to the endoplasmic reticulum membrane. Chaperone required for the export of the chitin synthase chs3 from the endoplasmic reticulum. The polypeptide is Chitin synthase export chaperone (chs7) (Aspergillus oryzae (strain ATCC 42149 / RIB 40) (Yellow koji mold)).